The primary structure comprises 97 residues: YcgL domain-containing protein PputW619_3899 (97 aa).

The YcgL domain occupies 3 to 87 (RICSIYKSPR…AEDEYIEHLP (85 aa)).

The polypeptide is YcgL domain-containing protein PputW619_3899 (Pseudomonas putida (strain W619)).